The following is a 146-amino-acid chain: MFTGSAALNLDAKGRLTMPTRYRASLIDTCGGQLVLTLHPFDDCLALYPRAEFMDTAKKLSEQRDSNPQVRQLKRRFLGQAAEIEMDGSGRLLVPPELRAAINLEKRAMLIGQLHRFEIWKEESWADVDGTLDPAALPESVQELSF.

SpoVT-AbrB domains follow at residues 5 to 52 (SAAL…PRAE) and 81 to 124 (AAEI…KEES).

It belongs to the MraZ family. As to quaternary structure, forms oligomers.

The protein localises to the cytoplasm. It localises to the nucleoid. In Alcanivorax borkumensis (strain ATCC 700651 / DSM 11573 / NCIMB 13689 / SK2), this protein is Transcriptional regulator MraZ.